Here is a 338-residue protein sequence, read N- to C-terminus: Ketol-acid reductoisomerase (NADP(+)) (338 aa).

In terms of domain architecture, KARI N-terminal Rossmann spans 1–181 (MKVFYDKDAD…GGGRAGIIET (181 aa)). NADP(+) is bound by residues 24–27 (YGSQ), Arg47, and Ser52. His107 is a catalytic residue. Gly133 lines the NADP(+) pocket. In terms of domain architecture, KARI C-terminal knotted spans 182 to 327 (NFREETETDL…AKLRAMMPWI (146 aa)). The Mg(2+) site is built by Asp190, Glu194, Glu226, and Glu230. A substrate-binding site is contributed by Ser251.

It belongs to the ketol-acid reductoisomerase family. It depends on Mg(2+) as a cofactor.

The catalysed reaction is (2R)-2,3-dihydroxy-3-methylbutanoate + NADP(+) = (2S)-2-acetolactate + NADPH + H(+). It carries out the reaction (2R,3R)-2,3-dihydroxy-3-methylpentanoate + NADP(+) = (S)-2-ethyl-2-hydroxy-3-oxobutanoate + NADPH + H(+). It participates in amino-acid biosynthesis; L-isoleucine biosynthesis; L-isoleucine from 2-oxobutanoate: step 2/4. Its pathway is amino-acid biosynthesis; L-valine biosynthesis; L-valine from pyruvate: step 2/4. Involved in the biosynthesis of branched-chain amino acids (BCAA). Catalyzes an alkyl-migration followed by a ketol-acid reduction of (S)-2-acetolactate (S2AL) to yield (R)-2,3-dihydroxy-isovalerate. In the isomerase reaction, S2AL is rearranged via a Mg-dependent methyl migration to produce 3-hydroxy-3-methyl-2-ketobutyrate (HMKB). In the reductase reaction, this 2-ketoacid undergoes a metal-dependent reduction by NADPH to yield (R)-2,3-dihydroxy-isovalerate. The polypeptide is Ketol-acid reductoisomerase (NADP(+)) (Ralstonia pickettii (strain 12J)).